The chain runs to 524 residues: 56 kDa type-specific antigen (524 aa).

The N-terminal stretch at 1–22 (MKKIMLIASAMSALSLPFSASA) is a signal peptide. The helical transmembrane segment at 67–87 (LTTGLPFGGTLAAGMTIAPGF) threads the bilayer. Disordered stretches follow at residues 112–132 (SKGE…RKRF) and 387–422 (EKLA…KGKE). Composition is skewed to basic and acidic residues over residues 395-405 (EDAKNQGEGDC) and 413-422 (EKSKEGKGKE). Residues 472 to 492 (TGMVASGALGVAINAAEGVYV) form a helical membrane-spanning segment.

The protein localises to the cell membrane. In terms of biological role, may be an adherent factor for rickettsial adsorption to the host-cell surface and a determinant of virulence of individual rickettsial strain. It is the major outer membrane protein. In Orientia tsutsugamushi (Rickettsia tsutsugamushi), this protein is 56 kDa type-specific antigen.